A 213-amino-acid polypeptide reads, in one-letter code: MAETYDFLFKFLVIGSAGTGKSCLLHQFIENKFKQDSNHTIGVEFGSRVVNVGGKTVKLQIWDTAGQERFRSVTRSYYRGAAGALLVYDITSRETYNSLAAWLTDARTLASPNIVVILCGNKKDLDPEREVTFLEASRFAQENELMFLETSALTGENVEEAFLKCARTILNKIDSGELDPERMGSGIQYGDASLRQLRQPRSAQAVAPQPCGC.

Alanine 2 carries the N-acetylalanine modification. GDP is bound by residues glycine 18, threonine 19, glycine 20, lysine 21, serine 22, and cysteine 23. Residues glycine 18, threonine 19, glycine 20, lysine 21, serine 22, cysteine 23, serine 37, histidine 39, and threonine 40 each contribute to the GTP site. Serine 22 lines the Mg(2+) pocket. Residues 39 to 44 (HTIGVE) carry the Switch 1 motif. 2 residues coordinate Mg(2+): threonine 40 and aspartate 63. A Switch 2 motif is present at residues 65–74 (AGQERFRSVT). GTP is bound at residue glycine 66. Glutamine 67 carries the post-translational modification 5-glutamyl serotonin. GDP-binding residues include asparagine 121, lysine 122, aspartate 124, alanine 152, and leucine 153. Residues asparagine 121, lysine 122, aspartate 124, alanine 152, and leucine 153 each coordinate GTP. 2 positions are modified to phosphoserine: serine 185 and serine 193. Residues cysteine 211 and cysteine 213 are each lipidated (S-geranylgeranyl cysteine). Cysteine 213 is subject to Cysteine methyl ester.

It belongs to the small GTPase superfamily. Rab family. In terms of assembly, interacts (GTP-bound form) with RUFY1; the interaction allows endosomal tethering and fusion. Requires Mg(2+) as cofactor. Post-translationally, serotonylation of Gln-67 by TGM2 during activation and aggregation of platelets leads to constitutive activation of GTPase activity.

It is found in the cell membrane. The protein localises to the early endosome membrane. It catalyses the reaction GTP + H2O = GDP + phosphate + H(+). Its activity is regulated as follows. Regulated by guanine nucleotide exchange factors (GEFs) which promote the exchange of bound GDP for free GTP. Regulated by GTPase activating proteins (GAPs) which increase the GTP hydrolysis activity. Inhibited by GDP dissociation inhibitors (GDIs). Its function is as follows. The small GTPases Rab are key regulators of intracellular membrane trafficking, from the formation of transport vesicles to their fusion with membranes. Rabs cycle between an inactive GDP-bound form and an active GTP-bound form that is able to recruit to membranes different set of downstream effectors directly responsible for vesicle formation, movement, tethering and fusion. RAB4B mediates endosomal tethering and fusion through the interaction with RUFY1 and RAB14. Acts as a regulator of platelet alpha-granule release during activation and aggregation of platelets. This Homo sapiens (Human) protein is Ras-related protein Rab-4B.